A 186-amino-acid chain; its full sequence is Enhancer of split m7 protein (186 aa).

Residues Tyr13–Leu68 enclose the bHLH domain. One can recognise an Orange domain in the interval Phe83–Leu116. Positions Trp183–Trp186 match the WRPW motif motif.

Transcription repression requires formation of a complex with a corepressor protein (Groucho). Forms homodimers.

The protein localises to the nucleus. Participates in the control of cell fate choice by uncommitted neuroectodermal cells in the embryo. Transcriptional repressor. Binds DNA on N-box motifs: 5'-CACNAG-3'. This Drosophila melanogaster (Fruit fly) protein is Enhancer of split m7 protein.